A 501-amino-acid polypeptide reads, in one-letter code: Cell division control protein 24 (501 aa).

In terms of assembly, interacts with dna2, pcn1 and rfc1.

Its subcellular location is the nucleus. It is found in the cytoplasm. Has a role in the progression of DNA replication and in the maintenance of genomic integrity. Acts during S phase, after initiation, where it is essential for completion. This Schizosaccharomyces pombe (strain 972 / ATCC 24843) (Fission yeast) protein is Cell division control protein 24 (cdc24).